The following is a 727-amino-acid chain: Rho-related BTB domain-containing protein 2 (727 aa).

Residues 1-210 (MDSDMDYERP…DNAIRAALIS (210 aa)) are rho-like. GTP-binding positions include 21-28 (GDNAVGKT), 84-88 (DTFGD), and 140-143 (CQLD). 2 BTB domains span residues 266 to 442 (ADVI…DENE) and 500 to 567 (SDVT…TSSP). The interval 304 to 333 (ELGGPSEPGGTHPEDHQGHSDQHHHHHHHH) is disordered. The span at 315 to 324 (HPEDHQGHSD) shows a compositional bias: basic and acidic residues. A disordered region spans residues 703–727 (FWNSPSSPSSSAASSSSPSSSSAVV). A compositionally biased stretch (low complexity) spans 706 to 727 (SPSSPSSSAASSSSPSSSSAVV).

It belongs to the small GTPase superfamily. Rho family. As to quaternary structure, interacts with HSP90AA1 and HSP90AB1. Forms a complex with CUL3 and RBX1. Interacts (via BTB 1 domain) with CUL3. Interacts with MSI2. In terms of processing, autoubiquitinated by RHOBTB2-CUL3-RBX1 ubiquitin ligase complex. Ubiquitous, with highest levels in neural tissues. Expression is also detected in fetal lung, heart, and brain.

Its function is as follows. Regulator of cell proliferation and apoptosis. It likely functions as a substrate-adapter that recruits key substrates, e.g. MSI2, to CUL3-based ubiquitin ligase complexes for degradation. Required for MSI2 ubiquitination and degradation. The sequence is that of Rho-related BTB domain-containing protein 2 (RHOBTB2) from Homo sapiens (Human).